A 179-amino-acid polypeptide reads, in one-letter code: Diphosphoinositol polyphosphate phosphohydrolase 2 (179 aa).

Substrate-binding positions include Arg9, 17–19 (KKR), and 38–40 (SSR). The Nudix hydrolase domain maps to 17-143 (KKRAACLCFR…VHAEYLERLK (127 aa)). Residues Gly49 and Glu65 each coordinate Mg(2+). Residues 50 to 71 (GGVEPEEEPGGAAAREVYEEAG) carry the Nudix box motif. The active-site Proton acceptor is the Glu68. Glu69 serves as a coordination point for Mg(2+). Residues 88 to 90 (RKH), Arg114, and Lys132 each bind substrate.

Belongs to the Nudix hydrolase family. DIPP subfamily. The cofactor is Mg(2+). Mn(2+) serves as cofactor.

It localises to the cytoplasm. The enzyme catalyses diphospho-myo-inositol polyphosphate + H2O = myo-inositol polyphosphate + phosphate.. It catalyses the reaction 5-diphospho-1D-myo-inositol 1,2,3,4,6-pentakisphosphate + H2O = 1D-myo-inositol hexakisphosphate + phosphate + H(+). It carries out the reaction 3,5-bis(diphospho)-1D-myo-inositol 1,2,4,6-tetrakisphosphate + H2O = 3-diphospho-1D-myo-inositol 1,2,4,5,6-pentakisphosphate + phosphate + 2 H(+). The catalysed reaction is 5-diphospho-1D-myo-inositol 1,3,4,6-tetrakisphosphate + H2O = 1D-myo-inositol 1,3,4,5,6-pentakisphosphate + phosphate + H(+). The enzyme catalyses P(1),P(6)-bis(5'-adenosyl) hexaphosphate + H2O = 2 ATP + 2 H(+). It catalyses the reaction P(1),P(5)-bis(5'-adenosyl) pentaphosphate + H2O = ADP + ATP + 2 H(+). It carries out the reaction 5-phospho-alpha-D-ribose 1-diphosphate + H2O = alpha-D-ribose 1,5-bisphosphate + phosphate + H(+). Functionally, cleaves the beta-phosphate from diphosphoinositol polyphosphates such as PP-InsP5 (diphosphoinositol pentakisphosphate), PP-InsP4 (diphosphoinositol tetrakisphosphate) and [PP]2-InsP4 (bisdiphosphoinositol tetrakisphosphate), suggesting that it may play a role in signal transduction. Diadenosine polyphosphates, particularly Ap6A (P(1),P(6)-bis(5a-adenosyl) hexaphosphate) and Ap5A (P(1),P(5)-bis(5'-adenosyl) pentaphosphate) are downstream effectors of a signaling cascade that regulates cardiac KATP channels, can also be substrates, although with lower preference than the diphosphoinositol polyphosphates. Can also catalyze the hydrolysis of 5-phosphoribose 1-diphosphate, generating the glycolytic activator ribose 1,5-bisphosphate. Does not play a role in U8 snoRNA decapping activity. Binds U8 snoRNA. The protein is Diphosphoinositol polyphosphate phosphohydrolase 2 of Rattus norvegicus (Rat).